A 56-amino-acid chain; its full sequence is Meucin-25 (56 aa).

The N-terminal stretch at 1–31 is a signal peptide; sequence MFRIEYSLVQLLLRNVTIPLLLIIQMHIMSS.

The protein belongs to the non-disulfide-bridged peptide (NDBP) superfamily. Antimalarial peptide (group 5) family. Expressed by the venom gland.

It localises to the secreted. Its function is as follows. This synthetic cationic peptide inhibits the development of Plasmodium berghei ookinetes, kills intraerythrocytic P.falciparum, and is cytotoxic to the Drosophila S2 cell at micromolar concentrations. No antibacterial, antifungal and hemolytic activities have been found at micromolar concentrations. The chain is Meucin-25 from Mesobuthus eupeus (Lesser Asian scorpion).